We begin with the raw amino-acid sequence, 315 residues long: Aspartate carbamoyltransferase catalytic subunit (315 aa).

Positions 55 and 56 each coordinate carbamoyl phosphate. Lys83 is an L-aspartate binding site. Carbamoyl phosphate is bound by residues Arg105, His138, and Gln141. Arg171 and Arg225 together coordinate L-aspartate. Residues Gly266 and Pro267 each contribute to the carbamoyl phosphate site.

Belongs to the aspartate/ornithine carbamoyltransferase superfamily. ATCase family. In terms of assembly, heterododecamer (2C3:3R2) of six catalytic PyrB chains organized as two trimers (C3), and six regulatory PyrI chains organized as three dimers (R2).

The enzyme catalyses carbamoyl phosphate + L-aspartate = N-carbamoyl-L-aspartate + phosphate + H(+). It participates in pyrimidine metabolism; UMP biosynthesis via de novo pathway; (S)-dihydroorotate from bicarbonate: step 2/3. Functionally, catalyzes the condensation of carbamoyl phosphate and aspartate to form carbamoyl aspartate and inorganic phosphate, the committed step in the de novo pyrimidine nucleotide biosynthesis pathway. This is Aspartate carbamoyltransferase catalytic subunit from Mycolicibacterium vanbaalenii (strain DSM 7251 / JCM 13017 / BCRC 16820 / KCTC 9966 / NRRL B-24157 / PYR-1) (Mycobacterium vanbaalenii).